The sequence spans 191 residues: Protein LIGHT-DEPENDENT SHORT HYPOCOTYLS 9 (191 aa).

Residues 1–14 (MSSDRHTPTKDPPD) are compositionally biased toward basic and acidic residues. Disordered regions lie at residues 1–41 (MSSD…YESQ) and 153–191 (QAKA…QSFT). Residues 37–165 (RYESQKRRDW…ARGIPYRKKK (129 aa)) enclose the ALOG domain. The span at 160–169 (PYRKKKRRKT) shows a compositional bias: basic residues. The Nuclear localization signal motif lies at 163–167 (KKKRR). The segment covering 181–191 (ANSSTPNQSFT) has biased composition (polar residues).

Belongs to the plant homeotic and developmental regulators ALOG protein family.

Its subcellular location is the nucleus. Functionally, probable transcription regulator that acts as a developmental regulator by promoting cell growth in response to light. This is Protein LIGHT-DEPENDENT SHORT HYPOCOTYLS 9 (LSH9) from Arabidopsis thaliana (Mouse-ear cress).